Here is a 323-residue protein sequence, read N- to C-terminus: Putative gluconeogenesis factor (323 aa).

This sequence belongs to the gluconeogenesis factor family.

The protein localises to the cytoplasm. Its function is as follows. Required for morphogenesis under gluconeogenic growth conditions. The chain is Putative gluconeogenesis factor from Thermoanaerobacterium thermosulfurigenes (Clostridium thermosulfurogenes).